The chain runs to 159 residues: Large ribosomal subunit protein uL22 (159 aa).

The disordered stretch occupies residues 129-159 (VEGQQKAKMARQKAVTSVVKAPSKTQGGVQK).

Belongs to the universal ribosomal protein uL22 family. In terms of assembly, part of the 50S ribosomal subunit.

Functionally, this protein binds specifically to 23S rRNA; its binding is stimulated by other ribosomal proteins, e.g. L4, L17, and L20. It is important during the early stages of 50S assembly. It makes multiple contacts with different domains of the 23S rRNA in the assembled 50S subunit and ribosome. Its function is as follows. The globular domain of the protein is located near the polypeptide exit tunnel on the outside of the subunit, while an extended beta-hairpin is found that lines the wall of the exit tunnel in the center of the 70S ribosome. The chain is Large ribosomal subunit protein uL22 (rplV) from Mycoplasma pneumoniae (strain ATCC 29342 / M129 / Subtype 1) (Mycoplasmoides pneumoniae).